Here is a 180-residue protein sequence, read N- to C-terminus: ADP-ribosylation factor 4 (180 aa).

Gly-2 carries the N-myristoyl glycine lipid modification. GTP-binding positions include Gly-24–Thr-31, Asp-67–Gln-71, and Asn-126–Asp-129. A Phosphoserine modification is found at Ser-147.

This sequence belongs to the small GTPase superfamily. Arf family. Forms a complex containing RAB11A, ASAP1, RAB3IP, RAP11FIP3 and ARF4; the complex promotes preciliary trafficking; the complex binds to RHO in photoreceptor cells and promotes RHO ciliary transport.

The protein localises to the golgi apparatus. Its subcellular location is the membrane. GTP-binding protein that functions as an allosteric activator of the cholera toxin catalytic subunit, an ADP-ribosyltransferase. Involved in protein trafficking; may modulate vesicle budding and uncoating within the Golgi apparatus. Part of the ciliary targeting complex containing Rab11, ASAP1, Rabin8/RAB3IP, RAB11FIP3 and ARF4, which direct preciliary vesicle trafficking to mother centriole and ciliogenesis initiation. The sequence is that of ADP-ribosylation factor 4 (ARF4) from Bos taurus (Bovine).